A 637-amino-acid polypeptide reads, in one-letter code: Chaperone protein HtpG (637 aa).

An a; substrate-binding region spans residues 1 to 348 (MAEAGQMEKH…SNDLPLNVSR (348 aa)). Residues 349–565 (EILQDNKITR…DNDMSTQMAK (217 aa)) form a b region. The c stretch occupies residues 566–637 (LMEAAGQAVP…TRLNKLMLNA (72 aa)).

It belongs to the heat shock protein 90 family. Homodimer.

The protein resides in the cytoplasm. Its function is as follows. Molecular chaperone. Has ATPase activity. This Idiomarina loihiensis (strain ATCC BAA-735 / DSM 15497 / L2-TR) protein is Chaperone protein HtpG.